The primary structure comprises 637 residues: ATP-dependent zinc metalloprotease FtsH (637 aa).

Residues 1-6 (MNNQGR) are Cytoplasmic-facing. Residues 7 to 27 (SILAWAALFIFVILLFNVFQS) traverse the membrane as a helical segment. Topologically, residues 28–103 (DGLLGVRNNI…VVPLETRMNT (76 aa)) are periplasmic. Residues 104–124 (FLGFLISWFPMLLLIGVWVFF) traverse the membrane as a helical segment. Residues 125–637 (MRQMHGGGKA…TKAQKENIAS (513 aa)) lie on the Cytoplasmic side of the membrane. 195 to 202 (GPPGTGKT) contacts ATP. His417 lines the Zn(2+) pocket. Residue Glu418 is part of the active site. Residues His421 and Asp495 each contribute to the Zn(2+) site. The interval 617-637 (DKEKLHEKTKTTKAQKENIAS) is disordered.

It in the central section; belongs to the AAA ATPase family. This sequence in the C-terminal section; belongs to the peptidase M41 family. In terms of assembly, homohexamer. Zn(2+) serves as cofactor.

It is found in the cell inner membrane. Its function is as follows. Acts as a processive, ATP-dependent zinc metallopeptidase for both cytoplasmic and membrane proteins. Plays a role in the quality control of integral membrane proteins. This is ATP-dependent zinc metalloprotease FtsH from Rickettsia typhi (strain ATCC VR-144 / Wilmington).